A 430-amino-acid polypeptide reads, in one-letter code: Asparagine--tRNA ligase (430 aa).

It belongs to the class-II aminoacyl-tRNA synthetase family. Homodimer.

It is found in the cytoplasm. The enzyme catalyses tRNA(Asn) + L-asparagine + ATP = L-asparaginyl-tRNA(Asn) + AMP + diphosphate + H(+). In Bacillus velezensis (strain DSM 23117 / BGSC 10A6 / LMG 26770 / FZB42) (Bacillus amyloliquefaciens subsp. plantarum), this protein is Asparagine--tRNA ligase.